A 740-amino-acid chain; its full sequence is Ribosomal protein S6 kinase alpha-6 (740 aa).

The Protein kinase 1 domain occupies 67–326 (FELLKVLGQG…VEEIKRHTFF (260 aa)). ATP-binding positions include 73–81 (LGQGSFGKV) and Lys99. Asp192 serves as the catalytic Proton acceptor. The region spanning 327–396 (STIDWNKLYR…VAPVSLEESK (70 aa)) is the AGC-kinase C-terminal domain. Residues 420–677 (YELKEDIGVG…AEQVLKHSWI (258 aa)) form the Protein kinase 2 domain. ATP-binding positions include 426–434 (IGVGSYSIC) and Lys449. The active-site Proton acceptor is the Asp537.

This sequence belongs to the protein kinase superfamily. AGC Ser/Thr protein kinase family. S6 kinase subfamily. As to quaternary structure, forms a complex with either ERK1 or ERK2 in quiescent cells. Transiently dissociates following mitogenic stimulation. Mg(2+) is required as a cofactor.

The enzyme catalyses L-seryl-[protein] + ATP = O-phospho-L-seryl-[protein] + ADP + H(+). It catalyses the reaction L-threonyl-[protein] + ATP = O-phospho-L-threonyl-[protein] + ADP + H(+). With respect to regulation, activated by multiple phosphorylations on threonine and serine residues. In terms of biological role, serine/threonine kinase that may play a role in mediating the growth-factor and stress induced activation of the transcription factor CREB. This Danio rerio (Zebrafish) protein is Ribosomal protein S6 kinase alpha-6 (rps6ka6).